The sequence spans 153 residues: Endoribonuclease YbeY (153 aa).

The Zn(2+) site is built by histidine 114, histidine 118, and histidine 124.

This sequence belongs to the endoribonuclease YbeY family. Zn(2+) is required as a cofactor.

It is found in the cytoplasm. Its function is as follows. Single strand-specific metallo-endoribonuclease involved in late-stage 70S ribosome quality control and in maturation of the 3' terminus of the 16S rRNA. The protein is Endoribonuclease YbeY of Shewanella putrefaciens (strain CN-32 / ATCC BAA-453).